A 425-amino-acid chain; its full sequence is Kynurenine/alpha-aminoadipate aminotransferase, mitochondrial (425 aa).

The transit peptide at 1 to 29 (MNYSRFLTATSLARKPSPIRTTADILSKA) directs the protein to the mitochondrion. Residue Arg-20 participates in substrate binding. Ser-40 is modified (phosphoserine). Position 69 is an N6-acetyllysine (Lys-69). A substrate-binding site is contributed by Tyr-74. An N6-succinyllysine modification is found at Lys-172. Lys-179 carries the N6-acetyllysine modification. Asn-202 serves as a coordination point for substrate. An N6-(pyridoxal phosphate)lysine; alternate modification is found at Lys-263. Lys-263 and Lys-339 each carry N6-acetyllysine; alternate. Lys-263 and Lys-339 each carry N6-succinyllysine; alternate. The residue at position 351 (Lys-351) is an N6-acetyllysine. At Lys-367 the chain carries N6-acetyllysine; alternate. At Lys-367 the chain carries N6-succinyllysine; alternate. Residue Arg-399 participates in substrate binding. N6-acetyllysine is present on Lys-422.

This sequence belongs to the class-I pyridoxal-phosphate-dependent aminotransferase family. Homodimer. Pyridoxal 5'-phosphate serves as cofactor. As to expression, expressed mainly in kidney and to a lesser amount in liver and brain.

The protein localises to the mitochondrion. The enzyme catalyses L-kynurenine + 2-oxoglutarate = kynurenate + L-glutamate + H2O. It catalyses the reaction L-2-aminoadipate + 2-oxoglutarate = 2-oxoadipate + L-glutamate. The catalysed reaction is glycine + 2-oxoglutarate = glyoxylate + L-glutamate. It carries out the reaction L-kynurenine + glyoxylate = kynurenate + glycine + H2O. The enzyme catalyses 3-hydroxy-L-kynurenine + glyoxylate = xanthurenate + glycine + H2O. It catalyses the reaction 2-oxohexanoate + L-kynurenine = L-2-aminohexanoate + kynurenate + H2O. The catalysed reaction is 3-phenylpyruvate + L-kynurenine = kynurenate + L-phenylalanine + H2O. It carries out the reaction 4-methylsulfanyl-2-oxobutanoate + L-kynurenine = kynurenate + L-methionine + H2O. The enzyme catalyses 2-oxo-3-sulfanylpropanoate + L-kynurenine = kynurenate + L-cysteine + H2O. It catalyses the reaction indole-3-pyruvate + L-kynurenine = kynurenate + L-tryptophan + H2O. The catalysed reaction is 2-oxopentanoate + L-kynurenine = L-2-aminopentanoate + kynurenate + H2O. It carries out the reaction 4-methyl-2-oxopentanoate + L-kynurenine = kynurenate + L-leucine + H2O. The enzyme catalyses glyoxylate + L-methionine = 4-methylsulfanyl-2-oxobutanoate + glycine. It catalyses the reaction L-2-aminoadipate + glyoxylate = 2-oxoadipate + glycine. The catalysed reaction is L-tyrosine + glyoxylate = 3-(4-hydroxyphenyl)pyruvate + glycine. It carries out the reaction glyoxylate + L-phenylalanine = 3-phenylpyruvate + glycine. The enzyme catalyses L-tryptophan + glyoxylate = indole-3-pyruvate + glycine. It catalyses the reaction L-leucine + glyoxylate = 4-methyl-2-oxopentanoate + glycine. The catalysed reaction is 2-oxobutanoate + L-kynurenine = (2S)-2-aminobutanoate + kynurenate + H2O. It carries out the reaction 2-oxoadipate + L-kynurenine = L-2-aminoadipate + kynurenate + H2O. It participates in amino-acid degradation; L-lysine degradation via saccharopine pathway; glutaryl-CoA from L-lysine: step 4/6. Its function is as follows. Transaminase with broad substrate specificity. Has transaminase activity towards aminoadipate, kynurenine, methionine and glutamate. Shows activity also towards tryptophan, aspartate and hydroxykynurenine. Accepts a variety of oxo-acids as amino-group acceptors, with a preference for 2-oxoglutarate, 2-oxocaproic acid, phenylpyruvate and alpha-oxo-gamma-methiol butyric acid. Can also use glyoxylate as amino-group acceptor (in vitro). The protein is Kynurenine/alpha-aminoadipate aminotransferase, mitochondrial of Mus musculus (Mouse).